A 312-amino-acid polypeptide reads, in one-letter code: Olfactory receptor 51B6 (312 aa).

Over 1 to 23 the chain is Extracellular; that stretch reads MGLNKSASTFQLTGFPGMEKAHH. The N-linked (GlcNAc...) asparagine glycan is linked to asparagine 4. The chain crosses the membrane as a helical span at residues 24–44; the sequence is WIFIPLLAAYISILLGNGTLL. At 45 to 52 the chain is on the cytoplasmic side; that stretch reads FLIRNDHN. A helical transmembrane segment spans residues 53–73; sequence LHEPMYYFLAMLAATDLGVTL. Topologically, residues 74-97 are extracellular; that stretch reads TTMPTVLGVLWLDHREIGHGACFS. Cysteine 95 and cysteine 187 are disulfide-bonded. The helical transmembrane segment at 98-118 threads the bilayer; that stretch reads QAYFIHTLSVMESGVLLAMAY. Topologically, residues 119 to 137 are cytoplasmic; the sequence is DCFITIRSPLRYTSILTNT. Residues 138–158 traverse the membrane as a helical segment; sequence QVMKIGVRVLTRAGLSIMPIV. Residues 159–194 lie on the Extracellular side of the membrane; it reads VRLHWFPYCRSHVLSHAFCLHQDVIKLACADITFNR. Residues 195 to 215 form a helical membrane-spanning segment; the sequence is LYPVVVLFAMVLLDFLIIFFS. The Cytoplasmic portion of the chain corresponds to 216–235; it reads YILILKTVMGIGSGGERAKA. A helical membrane pass occupies residues 236–256; the sequence is LNTCVSHICCILVFYVTVVCL. Topologically, residues 257 to 271 are extracellular; sequence TFIHRFGKHVPHVVH. The helical transmembrane segment at 272–292 threads the bilayer; the sequence is ITMSYIHFLFPPFMNPFIYSI. Residues 293-312 are Cytoplasmic-facing; it reads KTKQIQSGILRLFSLPHSRA.

Belongs to the G-protein coupled receptor 1 family.

It is found in the cell membrane. In terms of biological role, odorant receptor. This Homo sapiens (Human) protein is Olfactory receptor 51B6 (OR51B6).